The following is a 208-amino-acid chain: Large ribosomal subunit protein bL25 (208 aa).

The protein belongs to the bacterial ribosomal protein bL25 family. CTC subfamily. In terms of assembly, part of the 50S ribosomal subunit; part of the 5S rRNA/L5/L18/L25 subcomplex. Contacts the 5S rRNA. Binds to the 5S rRNA independently of L5 and L18.

Its function is as follows. This is one of the proteins that binds to the 5S RNA in the ribosome where it forms part of the central protuberance. In Paracoccus denitrificans (strain Pd 1222), this protein is Large ribosomal subunit protein bL25.